The following is a 150-amino-acid chain: MESANASTSATTIDQLCKTFNLSMHTLQINCVFCKNALTTAEIYSYAYKHLKVLFRGGYPYAACACCLEFHGKINQYRHFDYAGYATTVEEETKQDILDVLIRCYLCHKPLCEVEKVKHILTKARFIKLNCTWKGRCLHCWTTCMEDMLP.

2 zinc fingers span residues 31–67 (CVFC…CACC) and 104–140 (CYLC…CLHC).

It belongs to the papillomaviridae E6 protein family. In terms of assembly, forms homodimers. Interacts with ubiquitin-protein ligase UBE3A/E6-AP; this interaction stimulates UBE3A ubiquitin activity. Interacts with host TP53 and EP300; this interaction inhibits TP53 activity. Interacts with human zyxin.

The protein resides in the host cytoplasm. The protein localises to the host nucleus. Plays a major role in the induction and maintenance of cellular transformation. E6 associates with host UBE3A/E6-AP ubiquitin-protein ligase and modulates its activity. Sequesters tumor suppressor TP53 in the host cytoplasm and modulates its activity by interacting with host EP300 that results in the reduction of TP53 acetylation and activation. In turn, apoptosis induced by DNA damage is inhibited. E6 also protects host keratinocytes from apoptosis by mediating the degradation of host BAK1. May also inhibit host immune response. The protein is Protein E6 of Human papillomavirus type 6b.